Here is a 166-residue protein sequence, read N- to C-terminus: Small ribosomal subunit protein uS9 (166 aa).

Residues 135–166 are disordered; that stretch reads KKAGFLTRDPRATERKKYGLKKARKAPQYSKR. Residues 142-151 show a composition bias toward basic and acidic residues; that stretch reads RDPRATERKK. The span at 152–166 shows a compositional bias: basic residues; it reads YGLKKARKAPQYSKR.

Belongs to the universal ribosomal protein uS9 family.

The sequence is that of Small ribosomal subunit protein uS9 from Mycobacterium avium (strain 104).